The chain runs to 126 residues: Large ribosomal subunit protein eL8 (126 aa).

This sequence belongs to the eukaryotic ribosomal protein eL8 family. Part of the 50S ribosomal subunit. Probably part of the RNase P complex.

It localises to the cytoplasm. In terms of biological role, multifunctional RNA-binding protein that recognizes the K-turn motif in ribosomal RNA, the RNA component of RNase P, box H/ACA, box C/D and box C'/D' sRNAs. This Sulfolobus acidocaldarius (strain ATCC 33909 / DSM 639 / JCM 8929 / NBRC 15157 / NCIMB 11770) protein is Large ribosomal subunit protein eL8.